A 505-amino-acid polypeptide reads, in one-letter code: Protein FAM114A2 (505 aa).

A disordered region spans residues 1–65; that stretch reads MSDKDDIETP…KPSSDLETSK (65 aa). Positions 51–63 are enriched in basic and acidic residues; sequence KRPETKPSSDLET. Phosphoserine occurs at positions 87, 146, and 209. Positions 268–295 form a coiled coil; the sequence is LNSLSGEELETLKVELEQLKETFSLAEF. Residues 342 to 366 form a disordered region; the sequence is KSLTKPLAENEEGEKQSEAENTEQV.

The protein belongs to the FAM114 family.

In Homo sapiens (Human), this protein is Protein FAM114A2 (FAM114A2).